A 463-amino-acid polypeptide reads, in one-letter code: L-seryl-tRNA(Sec) selenium transferase (463 aa).

Lys-295 carries the N6-(pyridoxal phosphate)lysine modification.

The protein belongs to the SelA family. As to quaternary structure, homodecamer; pentamer of dimers. Binds only one seryl-tRNA(Sec) per dimer. It depends on pyridoxal 5'-phosphate as a cofactor.

It is found in the cytoplasm. The enzyme catalyses L-seryl-tRNA(Sec) + selenophosphate + H(+) = L-selenocysteinyl-tRNA(Sec) + phosphate. It participates in aminoacyl-tRNA biosynthesis; selenocysteinyl-tRNA(Sec) biosynthesis; selenocysteinyl-tRNA(Sec) from L-seryl-tRNA(Sec) (bacterial route): step 1/1. In terms of biological role, converts seryl-tRNA(Sec) to selenocysteinyl-tRNA(Sec) required for selenoprotein biosynthesis. This Escherichia coli O127:H6 (strain E2348/69 / EPEC) protein is L-seryl-tRNA(Sec) selenium transferase.